The primary structure comprises 177 residues: Alkyl hydroperoxide reductase AhpD (177 aa).

Cys131 acts as the Proton donor in catalysis. A disulfide bridge links Cys131 with Cys134. The active-site Cysteine sulfenic acid (-SOH) intermediate is the Cys134.

The protein belongs to the AhpD family. As to quaternary structure, homotrimer.

It catalyses the reaction N(6)-[(R)-dihydrolipoyl]-L-lysyl-[lipoyl-carrier protein] + a hydroperoxide = N(6)-[(R)-lipoyl]-L-lysyl-[lipoyl-carrier protein] + an alcohol + H2O. In terms of biological role, antioxidant protein with alkyl hydroperoxidase activity. Required for the reduction of the AhpC active site cysteine residues and for the regeneration of the AhpC enzyme activity. The sequence is that of Alkyl hydroperoxide reductase AhpD from Streptomyces avermitilis (strain ATCC 31267 / DSM 46492 / JCM 5070 / NBRC 14893 / NCIMB 12804 / NRRL 8165 / MA-4680).